Here is a 238-residue protein sequence, read N- to C-terminus: Lactate utilization protein A (238 aa).

It belongs to the LutA/YkgE family.

Is involved in L-lactate degradation and allows cells to grow with lactate as the sole carbon source. The protein is Lactate utilization protein A of Anoxybacillus flavithermus (strain DSM 21510 / WK1).